The following is a 460-amino-acid chain: MFS-type transporter PUL3 (460 aa).

Helical transmembrane passes span 16-36 (AVTLIAVQFSFDTCVYLSSVV), 50-70 (YLFILQAVSAAVQVFFSFIIG), 81-101 (WVIIFLYFLSFVGNFLYSCAG), 113-133 (IICGAASSSGAVVYSYITAIS), 151-171 (GICMALAQLVAILFALCDFTV), 181-201 (APTFASSFIILLICVLLMFVL), 240-260 (MFLSTFFMCEVLYFMPIFLTL), and 271-291 (VAFMVSAVLGVAGSFFAPDLV). The interval 300-323 (PSTQDETDTSDNDKIEKEESEQKS) is disordered. The span at 310-323 (DNDKIEKEESEQKS) shows a compositional bias: basic and acidic residues. 4 consecutive transmembrane segments (helical) span residues 333-353 (VSLTIFALFVALIGQAFMIGA), 369-389 (IFFTAGLSITMLGYNFMGSSV), 408-428 (FIGAIAGVGKLVAPIVLAALY), and 433-453 (GLPIGVGFGMILVGISIPSLV).

The protein belongs to the major facilitator superfamily. TCR/Tet family.

The protein localises to the cell membrane. Functionally, MFS-type transporer required for the uptake of iron via the uptake of the siderophore pulcherrimin-iron complex. The chain is MFS-type transporter PUL3 from Kluyveromyces lactis (strain ATCC 8585 / CBS 2359 / DSM 70799 / NBRC 1267 / NRRL Y-1140 / WM37) (Yeast).